The primary structure comprises 444 residues: Amino-acid acetyltransferase (444 aa).

One can recognise an N-acetyltransferase domain in the interval 295–434 (EKVRRANIND…QALYNYQRRS (140 aa)).

This sequence belongs to the acetyltransferase family. ArgA subfamily. In terms of assembly, homohexamer.

It localises to the cytoplasm. The enzyme catalyses L-glutamate + acetyl-CoA = N-acetyl-L-glutamate + CoA + H(+). It functions in the pathway amino-acid biosynthesis; L-arginine biosynthesis; N(2)-acetyl-L-ornithine from L-glutamate: step 1/4. The polypeptide is Amino-acid acetyltransferase (Proteus mirabilis (strain HI4320)).